The chain runs to 167 residues: 6,7-dimethyl-8-ribityllumazine synthase (167 aa).

5-amino-6-(D-ribitylamino)uracil-binding positions include phenylalanine 26, 60–62 (AFE), and 89–91 (AII). 94 to 95 (ET) serves as a coordination point for (2S)-2-hydroxy-3-oxobutyl phosphate. Histidine 97 functions as the Proton donor in the catalytic mechanism. Phenylalanine 122 contributes to the 5-amino-6-(D-ribitylamino)uracil binding site. Residue arginine 136 coordinates (2S)-2-hydroxy-3-oxobutyl phosphate.

This sequence belongs to the DMRL synthase family. Forms an icosahedral capsid composed of 60 subunits, arranged as a dodecamer of pentamers.

The catalysed reaction is (2S)-2-hydroxy-3-oxobutyl phosphate + 5-amino-6-(D-ribitylamino)uracil = 6,7-dimethyl-8-(1-D-ribityl)lumazine + phosphate + 2 H2O + H(+). Its pathway is cofactor biosynthesis; riboflavin biosynthesis; riboflavin from 2-hydroxy-3-oxobutyl phosphate and 5-amino-6-(D-ribitylamino)uracil: step 1/2. Functionally, catalyzes the formation of 6,7-dimethyl-8-ribityllumazine by condensation of 5-amino-6-(D-ribitylamino)uracil with 3,4-dihydroxy-2-butanone 4-phosphate. This is the penultimate step in the biosynthesis of riboflavin. The protein is 6,7-dimethyl-8-ribityllumazine synthase of Ruthia magnifica subsp. Calyptogena magnifica.